Consider the following 427-residue polypeptide: Cyclic 2,3-diphosphoglycerate synthetase (427 aa).

Belongs to the cyclic 2,3-diphosphoglycerate synthetase family.

The protein localises to the cytoplasm. It carries out the reaction (2R)-2,3-bisphosphoglycerate + ATP + H(+) = cyclic (2R)-2,3-bisphosphoglycerate + ADP + phosphate. Functionally, catalyzes the formation of cyclic 2,3-diphosphoglycerate (cDPG) by formation of an intramolecular phosphoanhydride bond at the expense of ATP. This Pyrococcus abyssi (strain GE5 / Orsay) protein is Cyclic 2,3-diphosphoglycerate synthetase.